The chain runs to 188 residues: Inosine triphosphate pyrophosphatase (188 aa).

Residue 9–14 participates in ITP binding; that stretch reads TGNAKK. Position 39 (Glu-39) interacts with Mg(2+). ITP-binding positions include Lys-51, 67 to 68, Lys-84, 143 to 146, Lys-166, and 171 to 172; these read DT, FGWD, and HR.

This sequence belongs to the HAM1 NTPase family. As to quaternary structure, homodimer. It depends on Mg(2+) as a cofactor. The cofactor is Mn(2+).

The protein resides in the cytoplasm. The enzyme catalyses ITP + H2O = IMP + diphosphate + H(+). The catalysed reaction is dITP + H2O = dIMP + diphosphate + H(+). It carries out the reaction XTP + H2O = XMP + diphosphate + H(+). In terms of biological role, pyrophosphatase that hydrolyzes non-canonical purine nucleotides such as inosine triphosphate (ITP), deoxyinosine triphosphate (dITP) or xanthosine 5'-triphosphate (XTP) to their respective monophosphate derivatives. The enzyme does not distinguish between the deoxy- and ribose forms. Probably excludes non-canonical purines from RNA and DNA precursor pools, thus preventing their incorporation into RNA and DNA and avoiding chromosomal lesions. The polypeptide is Inosine triphosphate pyrophosphatase (Aedes aegypti (Yellowfever mosquito)).